A 511-amino-acid polypeptide reads, in one-letter code: Probable dolichyl pyrophosphate Glc1Man9GlcNAc2 alpha-1,3-glucosyltransferase (511 aa).

Transmembrane regions (helical) follow at residues 4 to 24, 94 to 112, 124 to 144, 151 to 171, 210 to 230, 300 to 320, 332 to 352, 356 to 370, 377 to 394, 432 to 452, and 469 to 491; these read LFWH…PAYH, VYFQ…VLGV, DTQQ…LIFV, YNGL…RQRF, VVSA…PFAV, PAIT…PILV, LVFL…GWHV, AILM…LTLV, YAYV…PLLF, WLYM…SFLL, and YSAL…ISWG.

This sequence belongs to the ALG6/ALG8 glucosyltransferase family.

It localises to the endoplasmic reticulum membrane. The enzyme catalyses an alpha-D-Glc-(1-&gt;3)-alpha-D-Man-(1-&gt;2)-alpha-D-Man-(1-&gt;2)-alpha-D-Man-(1-&gt;3)-[alpha-D-Man-(1-&gt;2)-alpha-D-Man-(1-&gt;3)-[alpha-D-Man-(1-&gt;2)-alpha-D-Man-(1-&gt;6)]-alpha-D-Man-(1-&gt;6)]-beta-D-Man-(1-&gt;4)-beta-D-GlcNAc-(1-&gt;4)-alpha-D-GlcNAc-diphospho-di-trans,poly-cis-dolichol + a di-trans,poly-cis-dolichyl beta-D-glucosyl phosphate = an alpha-D-Glc-(1-&gt;3)-alpha-D-Glc-(1-&gt;3)-alpha-D-Man-(1-&gt;2)-alpha-D-Man-(1-&gt;2)-alpha-D-Man-(1-&gt;3)-[alpha-D-Man-(1-&gt;2)-alpha-D-Man-(1-&gt;3)-[alpha-D-Man-(1-&gt;2)-alpha-D-Man-(1-&gt;6)]-alpha-D-Man-(1-&gt;6)]-beta-D-Man-(1-&gt;4)-beta-D-GlcNAc-(1-&gt;4)-alpha-D-GlcNAc-diphospho-di-trans,poly-cis-dolichol + a di-trans,poly-cis-dolichyl phosphate + H(+). It participates in protein modification; protein glycosylation. Its function is as follows. Adds the second glucose residue to the lipid-linked oligosaccharide precursor for N-linked glycosylation. Transfers glucose from dolichyl phosphate glucose (Dol-P-Glc) onto the lipid-linked oligosaccharide Glc(1)Man(9)GlcNAc(2)-PP-Dol. Functions in developmental processes such as germband extension, the apical constriction of mesoderm precursor cells and ventral furrow formation in early embryogenesis prior to gastrulation. Involved in the glycosylation and intracellular distribution of shg (E-cadherin). Function in cell intercalation in the lateral epidermis during germband extension may be due to its effect on shg. The polypeptide is Probable dolichyl pyrophosphate Glc1Man9GlcNAc2 alpha-1,3-glucosyltransferase (Drosophila melanogaster (Fruit fly)).